Consider the following 85-residue polypeptide: Alpha-defensin 14 (85 aa).

An N-terminal signal peptide occupies residues 1–11; the sequence is ALVLLAFQVQA. Positions 12-50 are excised as a propeptide; sequence DPIQNTDEETKTEEQPGEDDQAVSVSFGDPEGSSLQEES. The tract at residues 13–48 is disordered; that stretch reads PIQNTDEETKTEEQPGEDDQAVSVSFGDPEGSSLQE. Intrachain disulfides connect cysteine 56–cysteine 84, cysteine 58–cysteine 73, and cysteine 63–cysteine 83.

The protein belongs to the alpha-defensin family. In terms of tissue distribution, paneth cells of the small bowel.

It localises to the secreted. In terms of biological role, probably contributes to the antimicrobial barrier function of the small bowel mucosa. The sequence is that of Alpha-defensin 14 (Defa14) from Mus musculus (Mouse).